A 1960-amino-acid chain; its full sequence is MILSYSRNLYPQSTGEKIVMGIDWSPNSQKLGVLTADHSLYLFNDQGERQDKIGLRSTEVKSSNKDFIPLCGTFSPCSTLFVVGQSDKVAYIFRLGQLWTDKKSIVARIPMDDAVTAVSWPLSEATSELSPIIFGTASGNLYLYSFQSKSIQAFVSSACFASLASSKTTTADNQATPLSPMSSPIIKILPIPSMPQCFVAVAESGLAVYVDIKTQQLRAAARHSKAVTTACMIAQKTSHGRHYLVLADVMCKVTVYAVETSAALCVCNIKTPQNIPFTASTASPSGGGCIVANASGLHFLTLVNSQPVTVSYEASSSAVTVYQDSGKGFLPQITSIAWRPDVSVLTVGTSLGSVDNFTPTIGSYRYCGAEVVNSAPNRATINIPRFNGSKRFAAGSIDLHASMSSELRTVKAFPKHDFTSFVQNPSGYKSTNIYLLGIGDSSIVIYSLNDDTINEFRYNASLTDKFFFDVGACRTMVISNTLGEFTVCYLTTQSDPGCTFYKVDIYATMRGCVAPHASVISCYPIYEDAAGSLNRISKIRTVCLGEERTDVLVTDLMPPDMCDDFSDPIVVLFRTKTSRAVDWLFFGPSGNAVLLRDISGGVSILNITDYSITQLSTSVGNGVVQWADPFDVIVGQESPDAPLYVWYNPTDIEDAPEILQPPVPVDNESWSFSYVKSNPNNFSKITAGHVKNISVQAIMTTPSGRQTSVSLDTNLLLFNLLLDKHDILGACQLLSALQDNNARVTNRNLWQKLCSVALDSFNFIVASRCYAALGDLPLSITAREIHERVQNAKDGEAGMTHDRMNLYCQAQIALLNSDLDKYDGLMMSCGRIDEVLTLYKELNLYSRAEKICPESMINTLRTEAIQWLINSGQMTTAGMLLAQRGDVRGALDLLIQDRSYLSAFELAKRAMTSSADPSLAPIIELLIGKLEDSHHYSQAAVLCTLGSGRNHERALALFRKSHAFDEALELARQHLPHECLPIEREWAEWLFQTGQYDKATQHYLECMNQEMAVESAFRANNFKLVESLLMDIPAAETNAHLCFRLAEMKYISGDAAGAATWLLKADQPLLGLSAFICAGKFDEAIQFIRSNLPRQSYRELLVHEAKRIISLGSAPSNNPVQEKTKTLTSSGVFASSSGESSEKQNVQSFLNRMESLSHIRGVYSAIELLKLAGLYEDVADILQGNSMWDELYSFAKEHAASFSNYPDILRMVADAKRVKGDKKSCATILEELCMELYGLSGSSSGSSGGMGAATDGYTRLRTQASHLIQARRDVLLEASSMYCDLFMYLEAIRLCKRCGDMDALTDVCLLWVSSNANRSLLIQQLKQLNIIEPTLTKAADRGMWDVCTELSEYCPDPEAVRCDLFWRRGRKLEIEGRLKEAEEFYAKAGKHQEIVGMYLDTGKFEDAQQAAMEMTSNFERERAMRSIRESKARVLASEGKWREAEAEFIELGLVEDIISIYRSNQMWQDALRVAKEHGDSVLVENLSESYVKHDKLRSGLGTSASAFEPGAKADLGDGSGLAGRTKQHGSDVQTARSILEAGSSAGLRKMLMSAARSGSDVLFEVVLHRCAELASMVLNNDIQDSSIVEDIAIISPSIHNFEEIGSPHERVMSLAVAYLSKGVPLSVTTGTESKGTISLIISDVCNREQLLLVCRGVLSLAFVESEYVNRITKQETHGDGIFCRLRSILLSYRNMLLNTVRGTKAAETDKVNFIPGDQELSRCFEATHLIIQLAKLFIGAKTISSMRDIVLVSSSLVRYCDLLPVDRCFVVAGESCKQFVEISNGNSNAKVMEARTQYLNQCCVFLNKFIDLHEEISNHSRNLERIDISDLTGSGIPWTAQVPVNLYLSKSRADEVRAFILELTMDESTTTTQELPREPCPFGCGKPIWIGACSCINCRQVSPICAVTGCHVINPNTHMLPSSRACQICGCYARPAPWNSLITKSKNCPVCEEVGFPIGK.

2 WD repeats span residues 63 to 103 and 328 to 367; these read SNKD…TDKK and GFLP…YRYC. 3 TPR repeats span residues 1064-1098, 1362-1395, and 1397-1428; these read KADQ…QSYR, CDLF…QEIV, and MYLD…RSIR.

It belongs to the IFT172 family.

Its subcellular location is the cell projection. It is found in the cilium. It localises to the flagellum. The protein resides in the cytoplasm. The protein localises to the cytoskeleton. Its subcellular location is the flagellum axoneme. It is found in the flagellum basal body. In terms of biological role, component of the intraflagellar transport complex B (IFT-B) involved in flagellar assembly. The chain is Intraflagellar transport protein 172 from Giardia intestinalis (strain ATCC 50803 / WB clone C6) (Giardia lamblia).